The chain runs to 157 residues: Protein Smg homolog (157 aa).

The protein belongs to the Smg family.

The chain is Protein Smg homolog from Xanthomonas campestris pv. campestris (strain 8004).